We begin with the raw amino-acid sequence, 118 residues long: Large ribosomal subunit protein bL20 (118 aa).

It belongs to the bacterial ribosomal protein bL20 family.

Functionally, binds directly to 23S ribosomal RNA and is necessary for the in vitro assembly process of the 50S ribosomal subunit. It is not involved in the protein synthesizing functions of that subunit. The protein is Large ribosomal subunit protein bL20 of Pseudomonas fluorescens (strain SBW25).